The following is a 624-amino-acid chain: Aeromonas extracellular serine protease (624 aa).

An N-terminal signal peptide occupies residues 1–24 (MKQTSLALAITALLSTLPSALVQA). An intrachain disulfide couples Cys28 to Cys48. Asn53 lines the Ca(2+) pocket. A Peptidase S8 domain is found at 59 to 421 (QWYLLNSGQD…GKVRDVKGLE (363 aa)). The active-site Charge relay system is the Asp102. A Ca(2+)-binding site is contributed by Asp111. The tract at residues 116 to 140 (VRPGSKNVVTGSDDPTPTDPDTAHG) is disordered. His139 acts as the Charge relay system in catalysis. Residues Val150, Asn152, Ile154, Thr156, Asp321, Leu322, Gly324, Met327, Asn330, and Cys350 each coordinate Ca(2+). Cys325 and Cys350 are oxidised to a cystine. Ser360 serves as the catalytic Charge relay system. One can recognise a P/Homo B domain in the interval 456–622 (LPPLVQLPWQ…SLRVLGHDAN (167 aa)). Ca(2+) is bound by residues Asp478, Asp512, Asp577, Ala579, Asn602, and Asn603.

Belongs to the peptidase S8 family. Furin subfamily. In terms of assembly, forms a complex with the chaperone ORF2 in the periplasm. After translocation of the ASP-ORF2 complex from the periplasm to the extracellular space, the complex is dissociated in a pH-dependent manner. Requires Ca(2+) as cofactor.

It is found in the periplasm. The protein localises to the secreted. It carries out the reaction Cleavage of -Lys-Lys-|-Xaa and -Lys-Arg-|-Xaa bonds.. Folding, maturation and production of the active form of the protease by the cell requires a protein (ORF2), encoded just downstream of asp, which acts as a chaperone. Formation of a complex with ORF2 in the periplasm also inactivates the protease activity and likely protects ASP from intrinsic proteases. In vitro, protease activity is inhibited by human alpha-2-macroglobulin, suggesting that this inhibitor can impede ASP virulence activities in A.sobria infection sites. However, slow ASP inhibition by alpha-2-macroglobulin in plasma may indicate insufficient ASP control in vivo. Activity is inhibited by serine protease inhibitors such as 4-(2-aminoethyl)-benzenesulfonyl fluoride (AEBSF) and diisopropyl fluorophosphate (DFP). Not inhibited by metallo-protease inhibitors and cysteine protease inhibitors. The treatment with reagents to modify sulfhydryl group do not reduce the activity. Its function is as follows. Exhibits serine protease activity. Preferentially cleaves the peptide bond following two basic residues, one of which is Lys, but does not recognize the bond following a single basic residue. Probable potent virulence factor that cleaves various host plasma proteins, including prekallikrein, prothrombin and fibrinogen. ASP induces vascular leakage and reduction in blood pressure by activating the host plasma kallikrein/kinin system. It affects the host coagulation system during infection through activation of prothrombin to alpha-thrombin and degradation of fibrinogen, which impairs plasma clottability. It also hydrolyzes the complement component C5, releasing the C5a anaphylatoxin, which causes the formation of pus and edema. In addition, degrades its external chaperone ORF2 after the secretion of the ASP-ORF2 complex. This is Aeromonas extracellular serine protease from Aeromonas sobria.